We begin with the raw amino-acid sequence, 437 residues long: Adenylosuccinate synthetase (437 aa).

Residues 12–18 (GDEGKGK) and 40–42 (GHT) contribute to the GTP site. Catalysis depends on Asp-13, which acts as the Proton acceptor. Mg(2+) is bound by residues Asp-13 and Gly-40. IMP-binding positions include 13–16 (DEGK), 38–41 (NAGH), Thr-128, Arg-142, Gln-223, Thr-238, and Arg-302. The Proton donor role is filled by His-41. 298-304 (TTTGRRR) contributes to the substrate binding site. GTP contacts are provided by residues Arg-304, 330-332 (KLD), and 412-414 (SLG).

This sequence belongs to the adenylosuccinate synthetase family. Homodimer. Mg(2+) is required as a cofactor.

The protein localises to the cytoplasm. The enzyme catalyses IMP + L-aspartate + GTP = N(6)-(1,2-dicarboxyethyl)-AMP + GDP + phosphate + 2 H(+). The protein operates within purine metabolism; AMP biosynthesis via de novo pathway; AMP from IMP: step 1/2. Functionally, plays an important role in the de novo pathway of purine nucleotide biosynthesis. Catalyzes the first committed step in the biosynthesis of AMP from IMP. The sequence is that of Adenylosuccinate synthetase from Parasynechococcus marenigrum (strain WH8102).